A 608-amino-acid chain; its full sequence is RAS guanyl-releasing protein 2 (608 aa).

The region spanning 4 to 126 (TLDLDKGCTV…SLIDIESVPT (123 aa)) is the N-terminal Ras-GEF domain. Phosphoserine is present on residues serine 116, serine 117, and serine 147. The Ras-GEF domain maps to 154–387 (EPMELAEHLT…YQLSLQREPR (234 aa)). The segment at 382-405 (LQREPRSKSSPTSPTSCTPPPRPP) is disordered. 2 EF-hand domains span residues 426–461 (HIEKMVESVFRNFDVDGDGHISQEEFQIIRGNFPYL) and 463–490 (AFGDLDQNQDGCISREEMISYFLRSSSV). 10 residues coordinate Ca(2+): aspartate 439, aspartate 441, aspartate 443, histidine 445, glutamate 450, aspartate 468, asparagine 470, aspartate 472, cysteine 474, and glutamate 479. The Phorbol-ester/DAG-type zinc-finger motif lies at 498-548 (VHNFQESNSLRPVACRHCKALILGIYKQGLKCRACGVNCHKQCKERLSVEC). Serine 554 and serine 575 each carry phosphoserine. The segment at 555 to 596 (VSLEGSAPSPSPTHTHHRAFSFSLPRPGRRSSRPPEIREEEV) is disordered.

This sequence belongs to the RASGRP family. Forms a signaling complex with RAP1 and BRAF. Interacts with F-actin. Interacts with RAP1. Detected in megakaryocytes, platelet and neutrophils but not in lymphocytes (at protein level). Isoform 1 and isoform 3 are detected in brain basal glanglia, heart, lung, spleen, liver and kidney interstitial cells.

The protein localises to the cytoplasm. It localises to the cytosol. The protein resides in the cell membrane. Its subcellular location is the synapse. It is found in the synaptosome. The protein localises to the cell projection. It localises to the ruffle membrane. In terms of biological role, functions as a calcium- and DAG-regulated nucleotide exchange factor specifically activating Rap through the exchange of bound GDP for GTP. May also activate other GTPases such as RRAS, RRAS2, NRAS, KRAS but not HRAS. Functions in aggregation of platelets and adhesion of T-lymphocytes and neutrophils probably through inside-out integrin activation. May function in the muscarinic acetylcholine receptor M1/CHRM1 signaling pathway. The polypeptide is RAS guanyl-releasing protein 2 (Rasgrp2) (Mus musculus (Mouse)).